The following is a 351-amino-acid chain: MSKQPSLSYKDAGVDIDAGEALVERIKGVARRTARPEVMGGLGGFGALCEIPAGYRQPVLVSGTDGVGTKLRLAMNLGKHDSIGIDLVAMCVNDLVVCGAEPLFFLDYYATGKLNVDVAARVVAGIGEGCEMAGCALVGGETAEMPGMYEGEDYDLAGFCVGVVEKSEIIDGAKVAAGDALIALPSSGPHSNGYSLIRKILELSGTDVAGATLDGKPLADLLMAPTRIYVKPLLKLIRETGAVKAMAHITGGGLTENIPRVLPQGTRAVIDVASWTRPAVFDWLQEKGNVDEREMHRVLNCGVGMVVCVARDKVEQALAVLRAAGEQPWLIGDIAAGDGAERVQLHNLKAH.

It belongs to the AIR synthase family.

The protein localises to the cytoplasm. The catalysed reaction is 2-formamido-N(1)-(5-O-phospho-beta-D-ribosyl)acetamidine + ATP = 5-amino-1-(5-phospho-beta-D-ribosyl)imidazole + ADP + phosphate + H(+). Its pathway is purine metabolism; IMP biosynthesis via de novo pathway; 5-amino-1-(5-phospho-D-ribosyl)imidazole from N(2)-formyl-N(1)-(5-phospho-D-ribosyl)glycinamide: step 2/2. This Azotobacter vinelandii (strain DJ / ATCC BAA-1303) protein is Phosphoribosylformylglycinamidine cyclo-ligase.